The sequence spans 146 residues: uncharacterized protein (146 aa).

An N-terminal signal peptide occupies residues M1–A17. Disordered regions lie at residues N27–L54 and E70–P146. Low complexity predominate over residues Q32–L54. The span at S77–H118 shows a compositional bias: polar residues.

This is an uncharacterized protein from Escherichia coli (strain K12).